Reading from the N-terminus, the 287-residue chain is MEIGLREWLIVIGIIVIAGILFDGWRRMRGSKGKLKFRLDRSFSNLPDEEETTSAEVLGPPRVLDTHKEPQLDEHDLPSMSASPREGKRSNSDKRSDKKRKDEPQQGDLNLDLDGPSLFTGRDDDFPDDKPTQRITEDKDLPPVEEVLVISVISRSEGGFKGPALLQNILESGLRFGEMDIFHRHESMAGNGEVLFSMANAVKPGVFDLDDIDHFSTRAVSFFLGLPGPRHPKQAFDVMVAAARKLAHELDGELKDDQRSVMTAQTIEHYRQRIVEFERRALTQRRG.

A topological domain (periplasmic) is located at residue methionine 1. A helical membrane pass occupies residues 2–22 (EIGLREWLIVIGIIVIAGILF). The Cytoplasmic segment spans residues 23-287 (DGWRRMRGSK…ERRALTQRRG (265 aa)). The segment at 48 to 140 (DEEETTSAEV…PTQRITEDKD (93 aa)) is disordered. 3 stretches are compositionally biased toward basic and acidic residues: residues 64–77 (LDTH…EHDL), 85–104 (REGK…KDEP), and 121–140 (GRDD…EDKD).

The protein belongs to the ZipA family. Interacts with FtsZ via their C-terminal domains.

It is found in the cell inner membrane. Functionally, essential cell division protein that stabilizes the FtsZ protofilaments by cross-linking them and that serves as a cytoplasmic membrane anchor for the Z ring. Also required for the recruitment to the septal ring of downstream cell division proteins. The polypeptide is Cell division protein ZipA (Pseudomonas syringae pv. syringae (strain B728a)).